The sequence spans 431 residues: Keratin, type I cytoskeletal 20 (431 aa).

Residues 1-23 (MDFSRQSFHRSLSSSSQGPALSM) are disordered. The segment at 1 to 76 (MDFSRQSFHR…SNGSDLFGGN (76 aa)) is head. Ser13 is subject to Phosphoserine; by MAPKAPK2, MAPKAPK3 and PKC. Residues Ser16 and Ser26 each carry the phosphoserine modification. The tract at residues 77–112 (GKLAMQNLNDRLANYLEKVRSLEQSNSRLEAQIKQW) is coil 1A. One can recognise an IF rod domain in the interval 77–388 (GKLAMQNLND…RLLEGEDIKT (312 aa)). The linker 1 stretch occupies residues 113-130 (YETNAPSTIRDYSSYYAQ). A coil 1B region spans residues 131–222 (IKELQNQVKD…KEHQEEVEVL (92 aa)). Positions 223–245 (RRQLGNNVNVEVDAAPGLNLGEI) are linker 12. The tract at residues 246 to 384 (MNEMRQRYEV…ATYRRLLEGE (139 aa)) is coil 2. The tail stretch occupies residues 385–431 (DIKTTEYQLSTLEMKDIKKTRKIKTVVEEVVDGKVVSSEVKEIEESV).

The protein belongs to the intermediate filament family. As to quaternary structure, heterotetramer of two type I and two type II keratins. Associates with KRT8. In terms of processing, hyperphosphorylation at Ser-13 occurs during the early stages of apoptosis but becomes less prominent during the later stages. Phosphorylation at Ser-13 also increases in response to stress brought on by cell injury. Proteolytically cleaved by caspases during apoptosis. Cleavage occurs at Asp-235. As to expression, expressed at low levels in the more differentiated suprabasal regions of the small intestine, and at higher levels in the colon, mainly in the upper region and in scattered cells throughout the remaining epithelium. Also expressed in epithelial cells of bladder, ileum and stomach and at lower levels in pancreas and earskin. The phosphorylated form is nearly exclusively expressed in goblet cells of the small intestine and in the lumen-proximal cells of the colon (at protein level). Also expressed in jejunum and duodenum.

Plays a significant role in maintaining keratin filament organization in intestinal epithelia. When phosphorylated, plays a role in the secretion of mucin in the small intestine. In Mus musculus (Mouse), this protein is Keratin, type I cytoskeletal 20.